Consider the following 467-residue polypeptide: MSKVASIVDVLQGKVAIGETVTVRGWVRTRRDSKAGLSFLAVYDGSCFDPIQAIINNDIENYESEILRLTTGCSVIVTGKVVESPAEGQAVELQAEKVEVTGFVEDPDTYPMAAKRHSIEYLREVAHLRPRTNIIGAVARVRHCLSQAIHRFFHEQGFYWVATPLITASDTEGAGEMFRVSTLDLENLPRSENGKVDFSQDFFGKESFLTVSGQLNGETYACALSKIYTFGPTFRAENSNTTRHLAEFWMVEPEVAFATLADNAKLAEDMLKYVFRAVLAERKDDLQFFEKHVDKDVITRLENFVNSDFAQIDYTDAIDVLLKSGKKFEFPVSWGIDLSSEHERFLAEEYFKSPVVVKNYPKDIKAFYMRLNDDEKTVAAMDVLAPGIGEIIGGSQREERLEVLDKRMEEMGLNPDDYWWYRDLRKYGSVPHSGFGLGFERLIVYVTGVQNIRDVIPFPRAPRNANF.

This sequence belongs to the class-II aminoacyl-tRNA synthetase family. In terms of assembly, homodimer.

It is found in the cytoplasm. The enzyme catalyses tRNA(Asn) + L-asparagine + ATP = L-asparaginyl-tRNA(Asn) + AMP + diphosphate + H(+). The chain is Asparagine--tRNA ligase from Haemophilus influenzae (strain ATCC 51907 / DSM 11121 / KW20 / Rd).